Reading from the N-terminus, the 2391-residue chain is Filaggrin-2 (2391 aa).

Positions 1–81 are S-100-like; it reads MTDLLRSVVT…TEFLLMIFKL (81 aa). 2 consecutive EF-hand domains span residues 8–43 and 49–84; these read VVTVIDVFYKYTKQDGECGTLSKGELKELLEKELHP and DDPDTVDVIMHMLDRDHDRRLDFTEFLLMIFKLTMA. Positions 62, 64, 66, 68, and 73 each coordinate Ca(2+). Disordered regions lie at residues 96–275, 349–369, and 406–2391; these read ASGS…DSGR, SYSQRGYGARENGQPQNCGGQ, and NSSS…LSRH. Residues 98 to 107 show a composition bias toward basic residues; that stretch reads GSKKHRRGHR. The segment covering 111–121 has biased composition (acidic residues); sequence EESETEEDEED. A compositionally biased stretch (basic residues) spans 149–163; sequence GTVKCRHGSNSRRLG. The segment covering 166–176 has biased composition (polar residues); it reads GNLSSSGNQEG. A compositionally biased stretch (basic and acidic residues) spans 193–209; sequence GKDRHGSSSVELRERIN. Residues 245-289 form a Filaggrin 1 repeat; the sequence is ETSGHESNSTQSRIREQKLGSSCSGSGDSGRRSHACGYSNSSGCG. 2 stretches are compositionally biased toward polar residues: residues 420–442 and 449–476; these read GSGSSQSTSFEQHGTGLSQSSGF and SGQTCGQHESTSSQSLGYDQHGSSSGKT. A Filaggrin 2 repeat occupies 421–466; sequence SGSSQSTSFEQHGTGLSQSSGFEQHVCGSGQTCGQHESTSSQSLGY. Gly residues predominate over residues 480-507; sequence GQHGSGSGQSSGFGQCGSGSGQSSGFGQ. Positions 508 to 562 are enriched in low complexity; it reads HGSVSGQSSGFGQHGSVSGQSSGFGQHESRSRQSSYGQHGSGSSQSSGYGQYGSR. The span at 568–604 shows a compositional bias: gly residues; it reads GQHGLGSGQSTGFGQYGSGSGQSSGFGQHGSGSGQSS. Over residues 605–655 the composition is skewed to low complexity; that stretch reads GFGQHESRSGQSSYGQHSSGSSQSSGYGQHGSRQTSGFGQHGSGSSQSTGF. A compositionally biased stretch (gly residues) spans 656-666; the sequence is GQYGSGSGQSS. The segment covering 667 to 734 has biased composition (low complexity); it reads GFGQHVSGSG…SSGQSSSFGQ (68 aa). Gly residues predominate over residues 735–756; it reads HGSGSGQSSGFGQHGSGSGQSS. Low complexity predominate over residues 757-807; the sequence is GFGQHESRSGQSSYGQHSSGSSQSSGYGQHGSRQTSGFGQHGSGSSQSTGF. Gly residues predominate over residues 808-831; it reads GQYGSGSGQSAGFGQHGSGSGQSS. Residues 832–884 are compositionally biased toward low complexity; it reads GFGQHESRSHQSSYGQHGSGSSQSSGYGQHGSSSGQTSGFGQHRSSSGQYSGF. Residues 885 to 908 are compositionally biased toward gly residues; the sequence is GQHGSGSGQSSGFGQHGTGSGQYS. The segment covering 918–956 has biased composition (low complexity); the sequence is HQSSYGQHGSGSSQSSGYGQHGSSSGQTFGFGQHRSGSG. Residues 957–972 are compositionally biased toward gly residues; that stretch reads QSSGFGQHGSGSGQSS. 2 stretches are compositionally biased toward low complexity: residues 973–982 and 994–1027; these read GFGQHESGSG and SSQSNYGQHGSGSSQSSGYGQHGSSSGQTTGFGQ. A Filaggrin 3 repeat occupies 1019-1051; it reads SGQTTGFGQHRSSSGQYSGFGQHGSGSDQSSGF. Gly residues predominate over residues 1052–1062; it reads GQHGTGSGQSS. The segment covering 1063-1098 has biased composition (low complexity); the sequence is GFGQYESRSRQSSYGQHGSGSSQSSGYGQHGSNSGQ. A Filaggrin 4 repeat occupies 1097–1141; that stretch reads GQTSGFGQHRPGSGQSSGFGQYGSGSGQSSGFGQHGSGTGKSSGF. The span at 1111-1137 shows a compositional bias: gly residues; it reads QSSGFGQYGSGSGQSSGFGQHGSGTGK. A compositionally biased stretch (low complexity) spans 1148–1174; sequence SGQSSYGQHGTGSSQSSGCGQHESGSG. Residues 1175–1198 show a composition bias toward polar residues; sequence PTTSFGQHVSGSDNFSSSGQHISD. The span at 1206 to 1220 shows a compositional bias: gly residues; it reads GQYGSGSGQSTGLGQ. Residues 1226–1249 show a composition bias toward polar residues; it reads VESGSTVHGRQETTHGQTINTTRH. Positions 1250 to 1263 are enriched in low complexity; the sequence is SQSGQGQSTQTGSR. A Phosphoserine modification is found at serine 1276. Positions 1329–1343 are enriched in polar residues; it reads HGQSTQTGSRTSGRQ. Over residues 1346–1355 the composition is skewed to basic and acidic residues; the sequence is SHSDATDSEV. The segment covering 1366 to 1377 has biased composition (polar residues); that stretch reads QEQTHSQAGSQH. Basic and acidic residues predominate over residues 1378–1390; the sequence is GESESTVHERHET. The segment covering 1406–1416 has biased composition (low complexity); it reads HGQSTQRGSRT. 2 positions are modified to phosphoserine: serine 1427 and serine 1428. The span at 1439 to 1459 shows a compositional bias: polar residues; the sequence is RPQSQEQTHGQAGSQHGESGS. The stretch at 1455 to 1510 is one Filaggrin 5 repeat; sequence GESGSTVHGRHGTTHGQTGDTTRHAHYHHGKSTQRGSSTTGRRGSGHSESSDSEVH. Residues 1487–1496 show a composition bias toward low complexity; that stretch reads TQRGSSTTGR. Serine 1504 and serine 1505 each carry phosphoserine. A compositionally biased stretch (low complexity) spans 1510 to 1529; it reads HSGGSHTHSGHTHGQSGSQH. Positions 1544 to 1559 are enriched in polar residues; the sequence is HGQTGDTTRHSYSGHE. The segment covering 1560 to 1572 has biased composition (low complexity); the sequence is QTTQTGSRTTGRQ. 2 stretches are compositionally biased toward basic and acidic residues: residues 1575–1584 and 1605–1618; these read SHSESTDSEV and QHEEPEFTVHERHG. Serine 1579 bears the Phosphoserine mark. A Filaggrin 6 repeat occupies 1607–1662; sequence EEPEFTVHERHGTTHGQIGDTTGHSHSGHGQSTQRGSRTTGRQRSSHSESSDSEVH. The span at 1627–1649 shows a compositional bias: low complexity; the sequence is TTGHSHSGHGQSTQRGSRTTGRQ. The segment covering 1652-1661 has biased composition (basic and acidic residues); sequence SHSESSDSEV. 2 positions are modified to phosphoserine: serine 1656 and serine 1657. Low complexity-rich tracts occupy residues 1662–1686 and 1711–1720; these read HSGVSHTHTGHTHGQAGSQHGQSES and GLTTQTGSRT. Basic and acidic residues predominate over residues 1755–1768; the sequence is QHGESESIVHERHG. Residues 1757 to 1812 form a Filaggrin 7 repeat; it reads GESESIVHERHGTIHGQTGDTTRHAHSGHGQSTQTGSRTTGRRSSGHSEYSDSEGH. Over residues 1784–1795 the composition is skewed to low complexity; sequence GHGQSTQTGSRT. Phosphoserine occurs at positions 1800 and 1807. Basic and acidic residues predominate over residues 1834-1845; that stretch reads GESESIVDERHG. The segment covering 1849 to 1873 has biased composition (low complexity); that stretch reads GQTGDTSGHSQSGHGQSTQSGSSTT. The segment covering 1879–1888 has biased composition (basic and acidic residues); sequence GHSESSDSEV. Serine 1883, serine 1884, and serine 1959 each carry phosphoserine. 2 Filaggrin repeats span residues 1928-1964 and 1984-2039; these read DTTEHGHPSHGQTIQTGSRTTGRRGSGHSEYSDSEGP and PESG…SEGH. Low complexity-rich tracts occupy residues 1963 to 1982 and 2013 to 2022; these read GPSGVSHTHSGHTHGQAGSH and GQSTQRGSRT. At serine 2034 the chain carries Phosphoserine. Composition is skewed to low complexity over residues 2039-2059, 2114-2125, and 2162-2176; these read HSGVSHTHSGHAHGQAGSQHG, HSGVSHTHSGHT, and HGQSTQTGSRTTGRQ. A Filaggrin 10 repeat occupies 2134 to 2189; sequence GESGSAIHGRQGTIHGQTGDTTRHGQSGHGQSTQTGSRTTGRQRSSHSESSDSEVH. Residues 2179 to 2190 are compositionally biased toward basic and acidic residues; the sequence is SHSESSDSEVHS. 3 stretches are compositionally biased toward low complexity: residues 2201 to 2211, 2219 to 2228, and 2238 to 2247; these read HSQAGSRHGQS, QGTTHGQTGD, and GQSTQRGSRT. A compositionally biased stretch (polar residues) spans 2273–2288; the sequence is GHIQGQAGSQQRQPGS. A compositionally biased stretch (low complexity) spans 2320 to 2331; sequence SRSSRASHFQSH. Positions 2367-2391 are enriched in polar residues; the sequence is SRKSISNSHLSWSTDSTANKQLSRH.

This sequence belongs to the S100-fused protein family. The protein in the N-terminal section; belongs to the S-100 family. In terms of processing, deiminated by PADI1, PADI2 or PADI3 in vitro. The deiminated form is degraded by calpain-1/CAPN1 more quickly and into shorter peptides than the intact protein. May be processed by calpain-1/CAPN1 in the uppermost epidermal layers. As to expression, expressed in skin, thymus, stomach and placenta, but not detected in heart, brain, liver, lung, bone marrow, small intestine, spleen, prostate, colon, adrenal gland, kidney, pancreas, mammary gland, bladder, thyroid, salivary gland and trachea. Weakly expressed in esophagus, tonsils and testis (at protein level). In the skin, strongly expressed in the upper stratum granulosum and lower stratum corneum, but not detected in the upper stratum corneum (at protein level). In scalp hair follicles, mainly restricted within the granular and cornified cells surrounding the infundibular outer root sheath, with weak expression in central and proximal outer root sheath (at protein level). Tends to be down-regulated in sporiatic lesions compared to non-lesional skin inthe same patients.

Its subcellular location is the cytoplasm. The protein resides in the cytoplasmic granule. In terms of biological role, essential for normal cell-cell adhesion in the cornified cell layers. Important for proper integrity and mechanical strength of the stratum corneum of the epidermis. This is Filaggrin-2 (FLG2) from Homo sapiens (Human).